An 89-amino-acid chain; its full sequence is Probable Fe(2+)-trafficking protein (89 aa).

It belongs to the Fe(2+)-trafficking protein family.

In terms of biological role, could be a mediator in iron transactions between iron acquisition and iron-requiring processes, such as synthesis and/or repair of Fe-S clusters in biosynthetic enzymes. The protein is Probable Fe(2+)-trafficking protein of Acinetobacter baumannii (strain AB0057).